The following is a 218-amino-acid chain: GTP cyclohydrolase 1 (218 aa).

3 residues coordinate Zn(2+): C109, H112, and C180.

The protein belongs to the GTP cyclohydrolase I family. In terms of assembly, toroid-shaped homodecamer, composed of two pentamers of five dimers.

It catalyses the reaction GTP + H2O = 7,8-dihydroneopterin 3'-triphosphate + formate + H(+). It participates in cofactor biosynthesis; 7,8-dihydroneopterin triphosphate biosynthesis; 7,8-dihydroneopterin triphosphate from GTP: step 1/1. This is GTP cyclohydrolase 1 (folE) from Haemophilus influenzae (strain ATCC 51907 / DSM 11121 / KW20 / Rd).